The sequence spans 791 residues: Vezatin (791 aa).

A run of 2 helical transmembrane segments spans residues Ile-138–Ala-158 and Ser-163–Leu-183. Residues Val-435–Glu-464 are a coiled coil. A compositionally biased stretch (acidic residues) spans Gly-752–Tyr-769. A disordered region spans residues Gly-752–Glu-791. Basic and acidic residues predominate over residues Lys-773–Asn-783.

This sequence belongs to the vezatin family. As to quaternary structure, interacts with myosin VIIa and the cadherin-catenins complex.

It localises to the cell membrane. It is found in the cell junction. Its subcellular location is the adherens junction. The protein resides in the nucleus. Functionally, plays a pivotal role in the establishment of adherens junctions and their maintenance in adult life. The sequence is that of Vezatin (vezt) from Xenopus tropicalis (Western clawed frog).